The sequence spans 310 residues: Translocator protein BipD (310 aa).

Coiled coils occupy residues 127 to 171 (DPIL…LQDY) and 250 to 299 (DTAR…AIST).

This sequence belongs to the invasin protein D family.

Its subcellular location is the secreted. In terms of biological role, required for invasion of epithelial cells, as well as for survival within host cells, escape from endocytic vesicles and subsequent actin-tail formation. Probably regulates the secretion of effectors BipB and BipC and their final integration into the target cell membrane. The protein is Translocator protein BipD (bipD) of Burkholderia pseudomallei (strain 1106a).